The following is a 244-amino-acid chain: Short-chain dehydrogenase/reductase family member NovK (244 aa).

Residues 9-12 (GGGE), 59-60 (EL), and 154-158 (RPVLD) each bind NADP(+).

It belongs to the short-chain dehydrogenases/reductases (SDR) family. In terms of assembly, heterotetramer; the NovJ(2)K(2) heterotetramer is composed of subunits of 2 NovJ and 2 subunits of NovK.

The protein operates within antibiotic biosynthesis; novobiocin biosynthesis. In terms of biological role, non-catalytic subunit of the NovJ(2)K(2) heterotetramer that catalyzes the NADPH-dependent reduction of the tyrosyl moiety of L-beta-OH-Tyr-S-NovH intermediate to yield the tethered beta-ketotyrosyl-S-NovH in the novobiocin biosynthesis pathway. Novobiocin is an aminocoumarin family antibiotic that targets bacterial DNA gyrases. The protein is Short-chain dehydrogenase/reductase family member NovK (novK) of Streptomyces niveus (Streptomyces spheroides).